A 107-amino-acid polypeptide reads, in one-letter code: Phosphoribosyl-ATP pyrophosphatase (107 aa).

It belongs to the PRA-PH family.

The protein localises to the cytoplasm. The enzyme catalyses 1-(5-phospho-beta-D-ribosyl)-ATP + H2O = 1-(5-phospho-beta-D-ribosyl)-5'-AMP + diphosphate + H(+). The protein operates within amino-acid biosynthesis; L-histidine biosynthesis; L-histidine from 5-phospho-alpha-D-ribose 1-diphosphate: step 2/9. This is Phosphoribosyl-ATP pyrophosphatase from Sinorhizobium medicae (strain WSM419) (Ensifer medicae).